We begin with the raw amino-acid sequence, 345 residues long: S-adenosylmethionine:tRNA ribosyltransferase-isomerase (345 aa).

The protein belongs to the QueA family. Monomer.

Its subcellular location is the cytoplasm. The enzyme catalyses 7-aminomethyl-7-carbaguanosine(34) in tRNA + S-adenosyl-L-methionine = epoxyqueuosine(34) in tRNA + adenine + L-methionine + 2 H(+). It participates in tRNA modification; tRNA-queuosine biosynthesis. Transfers and isomerizes the ribose moiety from AdoMet to the 7-aminomethyl group of 7-deazaguanine (preQ1-tRNA) to give epoxyqueuosine (oQ-tRNA). This is S-adenosylmethionine:tRNA ribosyltransferase-isomerase from Alkalilimnicola ehrlichii (strain ATCC BAA-1101 / DSM 17681 / MLHE-1).